The sequence spans 334 residues: Glutaminase (334 aa).

Residues serine 76, asparagine 126, glutamate 170, asparagine 177, tyrosine 201, tyrosine 253, and valine 271 each coordinate substrate.

It belongs to the glutaminase family. Homotetramer.

It carries out the reaction L-glutamine + H2O = L-glutamate + NH4(+). The chain is Glutaminase from Nostoc sp. (strain PCC 7120 / SAG 25.82 / UTEX 2576).